The following is a 371-amino-acid chain: Glycosyltransferase 8 domain-containing protein 1 (371 aa).

Topologically, residues 1–7 are cytoplasmic; sequence MSFRKVN. Residues 8–28 form a helical; Signal-anchor for type II membrane protein membrane-spanning segment; that stretch reads IIIWVLAVVLFLLVLHHNFLS. Residues 29 to 371 are Lumenal-facing; sequence LSSLLKNDIS…RRHMDTSNIK (343 aa). N-linked (GlcNAc...) asparagine glycosylation is present at Asn257.

Belongs to the glycosyltransferase 8 family.

The protein resides in the membrane. The sequence is that of Glycosyltransferase 8 domain-containing protein 1 (Glt8d1) from Mus musculus (Mouse).